Reading from the N-terminus, the 76-residue chain is DNA gyrase inhibitor YacG (76 aa).

Residues Cys20, Cys23, Cys39, and Cys43 each contribute to the Zn(2+) site. The disordered stretch occupies residues 54–76; the sequence is EEKSIPGAPDLSDSDGWSDDMGY. The segment covering 65–76 has biased composition (acidic residues); the sequence is SDSDGWSDDMGY.

It belongs to the DNA gyrase inhibitor YacG family. In terms of assembly, interacts with GyrB. Zn(2+) is required as a cofactor.

Functionally, inhibits all the catalytic activities of DNA gyrase by preventing its interaction with DNA. Acts by binding directly to the C-terminal domain of GyrB, which probably disrupts DNA binding by the gyrase. The sequence is that of DNA gyrase inhibitor YacG from Photobacterium profundum (strain SS9).